Here is a 251-residue protein sequence, read N- to C-terminus: Triosephosphate isomerase (251 aa).

9–11 (NWK) contacts substrate. The active-site Electrophile is His-95. The active-site Proton acceptor is the Glu-167. Substrate contacts are provided by residues Gly-173, Ser-212, and 233–234 (GG).

This sequence belongs to the triosephosphate isomerase family. Homodimer.

The protein localises to the cytoplasm. It catalyses the reaction D-glyceraldehyde 3-phosphate = dihydroxyacetone phosphate. It participates in carbohydrate biosynthesis; gluconeogenesis. It functions in the pathway carbohydrate degradation; glycolysis; D-glyceraldehyde 3-phosphate from glycerone phosphate: step 1/1. In terms of biological role, involved in the gluconeogenesis. Catalyzes stereospecifically the conversion of dihydroxyacetone phosphate (DHAP) to D-glyceraldehyde-3-phosphate (G3P). This chain is Triosephosphate isomerase, found in Pseudomonas fluorescens (strain Pf0-1).